The chain runs to 428 residues: Serine--tRNA ligase (428 aa).

235-237 (TAE) contributes to the L-serine binding site. Position 266–268 (266–268 (RSE)) interacts with ATP. Residue glutamate 289 coordinates L-serine. 353 to 356 (EISS) provides a ligand contact to ATP. Serine 389 is an L-serine binding site.

Belongs to the class-II aminoacyl-tRNA synthetase family. Type-1 seryl-tRNA synthetase subfamily. Homodimer. The tRNA molecule binds across the dimer.

The protein localises to the cytoplasm. It catalyses the reaction tRNA(Ser) + L-serine + ATP = L-seryl-tRNA(Ser) + AMP + diphosphate + H(+). It carries out the reaction tRNA(Sec) + L-serine + ATP = L-seryl-tRNA(Sec) + AMP + diphosphate + H(+). Its pathway is aminoacyl-tRNA biosynthesis; selenocysteinyl-tRNA(Sec) biosynthesis; L-seryl-tRNA(Sec) from L-serine and tRNA(Sec): step 1/1. In terms of biological role, catalyzes the attachment of serine to tRNA(Ser). Is also able to aminoacylate tRNA(Sec) with serine, to form the misacylated tRNA L-seryl-tRNA(Sec), which will be further converted into selenocysteinyl-tRNA(Sec). The protein is Serine--tRNA ligase of Shewanella frigidimarina (strain NCIMB 400).